The primary structure comprises 34 residues: uncharacterized protein (34 aa).

This is an uncharacterized protein from Rhizobium radiobacter (Agrobacterium tumefaciens).